Here is a 249-residue protein sequence, read N- to C-terminus: tRNA uridine(34) hydroxylase (249 aa).

The Rhodanese domain maps to 124-218; it reads TKQDVIVIDT…YLEDTQNKNN (95 aa). C178 serves as the catalytic Cysteine persulfide intermediate.

This sequence belongs to the TrhO family.

It catalyses the reaction uridine(34) in tRNA + AH2 + O2 = 5-hydroxyuridine(34) in tRNA + A + H2O. Its function is as follows. Catalyzes oxygen-dependent 5-hydroxyuridine (ho5U) modification at position 34 in tRNAs. This Rickettsia canadensis (strain McKiel) protein is tRNA uridine(34) hydroxylase.